A 160-amino-acid polypeptide reads, in one-letter code: Vegetative-specific protein V4 (160 aa).

Tandem repeats lie at residues 151-153 (NQP), 154-156 (NQP), and 157-159 (NQG). The 3 X 3 AA tandem repeats of N-Q-[PG] stretch occupies residues 151–159 (NQPNQPNQG).

Unknown. Its expression during growth is not required for growth but for the proper initiation of development, therefore playing a role in the transition from growth to development. The sequence is that of Vegetative-specific protein V4 (lmcB) from Dictyostelium discoideum (Social amoeba).